Reading from the N-terminus, the 498-residue chain is Pre-glycoprotein polyprotein GP complex (498 aa).

Gly-2 is lipidated: N-myristoyl glycine; by host. Topologically, residues 2–17 are extracellular; the sequence is GQIVTMFEALPHIIDE. A helical transmembrane segment spans residues 18 to 33; it reads VINIVIIVLIVITGIK. At 34 to 58 the chain is on the cytoplasmic side; it reads AVYNFATCGIFALISFLLLAGRSCG. Cys-57 is a binding site for Zn(2+). Residues 59-438 are Extracellular-facing; it reads MYGLKGPDIY…QGSTPLALMD (380 aa). Residues Asn-85, Asn-95, Asn-114, Asn-124, and Asn-171 are each glycosylated (N-linked (GlcNAc...) asparagine; by host). 6 disulfides stabilise this stretch: Cys-92–Cys-239, Cys-123–Cys-160, Cys-184–Cys-220, Cys-285–Cys-298, Cys-307–Cys-316, and Cys-370–Cys-391. An N-linked (GlcNAc...) asparagine; by host glycan is attached at Asn-232. Residues Asn-371, Asn-396, and Asn-401 are each glycosylated (N-linked (GlcNAc...) asparagine; by host). The helical transmembrane segment at 439–459 threads the bilayer; it reads LLMFSTSAYLVSIFLHLVKIP. The Cytoplasmic segment spans residues 460–498; it reads THRHIKGGSCPKPHRLTNKGICSCGAFKVPGVKTVWKRR. Zn(2+)-binding residues include His-461, His-463, Cys-469, His-473, Cys-481, and Cys-483.

It belongs to the arenaviridae GPC protein family. As to quaternary structure, interacts with glycoprotein G2. Part of the GP complex (GP-C) together with glycoprotein G1 and glycoprotein G2. The GP-complex interacts with protein Z, which interacts with ribonucleocapsid; these interactions may induce virion budding. Homotrimer; disulfide-linked. In pre-fusion state, G1 homotrimers bind G2 homotrimers via ionic interactions. Part of the GP complex (GP-C) together with glycoprotein G2 and the stable signal peptide. Interacts with the primary host receptor DAG1 on the cell surface. The GP-complex interacts with protein Z, which interacts with ribonucleocapsid; these interactions may induce virion budding. In terms of assembly, homotrimer. Interacts with the stable signal peptide. In pre-fusion state, G2 homotrimers bind G1 homotrimers via ionic interactions. Part of the GP complex (GP-C) together with glycoprotein G1 and the stable signal peptide. Acidification in the endosome triggers rearrangements, which ultimately leads to a 6 helix bundle formed by the two heptad repeat domains (HR1 and HR2) in post-fusion state. The GP-complex interacts with protein Z, which interacts with ribonucleocapsid; these interactions may induce virion budding. Post-translationally, specific enzymatic cleavages in vivo yield mature proteins. GP-C polyprotein is cleaved in the endoplasmic reticulum by the host protease MBTPS1. Only cleaved glycoprotein is incorporated into virions. In terms of processing, the SSP remains stably associated with the GP complex following cleavage by signal peptidase and plays crucial roles in the trafficking of GP through the secretory pathway. Myristoylation is necessary for GP2-mediated fusion activity. Inhibition of host myristoylation by the compound DDD85646 leads to the abrogation of GP2-mediated fusion upon exposure to low pH and inhibition of viral multiplication.

The protein localises to the virion membrane. The protein resides in the host endoplasmic reticulum membrane. It localises to the host Golgi apparatus membrane. It is found in the host cell membrane. Functions as a cleaved signal peptide that is retained as the third component of the GP complex (GP-C). Helps to stabilize the spike complex in its native conformation. The SSP is required for efficient glycoprotein expression, post-translational maturation cleavage of G1 and G2, glycoprotein transport to the cell surface plasma membrane, formation of infectious virus particles, and acid pH-dependent glycoprotein-mediated cell fusion. In terms of biological role, forms the virion spikes together with glycoprotein G2. The glycoprotein spike trimers are connected to the underlying matrix. Interacts with the host receptor. Mediates virus attachment to the host primary receptor alpha-dystroglycan DAG1 (alpha-DG) at the cell surface. Down-modulates host DAG1. Its function is as follows. Forms the virion spikes together with glycoprotein G1. The glycoprotein spike trimers are connected to the underlying matrix. Class I viral fusion protein that directs fusion of viral and host endosomal membranes, leading to delivery of the nucleocapsid into the cytoplasm. Membrane fusion is mediated by irreversible conformational changes induced by acidification. In Homo sapiens (Human), this protein is Pre-glycoprotein polyprotein GP complex.